Reading from the N-terminus, the 432-residue chain is D-amino acid dehydrogenase (432 aa).

Valine 3–tryptophan 17 serves as a coordination point for FAD.

Belongs to the DadA oxidoreductase family. The cofactor is FAD.

It catalyses the reaction a D-alpha-amino acid + A + H2O = a 2-oxocarboxylate + AH2 + NH4(+). It participates in amino-acid degradation; D-alanine degradation; NH(3) and pyruvate from D-alanine: step 1/1. Its function is as follows. Oxidative deamination of D-amino acids. The sequence is that of D-amino acid dehydrogenase from Salmonella arizonae (strain ATCC BAA-731 / CDC346-86 / RSK2980).